Reading from the N-terminus, the 132-residue chain is Insulin-like 3 (132 aa).

Positions 1-24 are cleaved as a signal peptide; it reads MSPRPLAWALVLLGAALAVALALG. Disulfide bonds link cysteine 36–cysteine 117, cysteine 48–cysteine 130, and cysteine 116–cysteine 121. A propeptide spans 61–104 (c peptide like); it reads VAGGDRELLQWLEGRHLHGQVSDGDPMLVLVPQALPQASLHHHH.

Belongs to the insulin family. Heterodimer of a B chain and an A chain linked by two disulfide bonds. As to expression, more strongly expressed in testis than in ovary.

The protein localises to the secreted. In terms of biological role, seems to play a role in testicular function. May be a trophic hormone with a role in testicular descent in fetal life. Is a ligand for LGR8 receptor. This Canis lupus familiaris (Dog) protein is Insulin-like 3 (INSL3).